The following is a 358-amino-acid chain: tRNA-specific 2-thiouridylase MnmA (358 aa).

ATP contacts are provided by residues A6 to S13 and M32. Residue C103 is the Nucleophile of the active site. C103 and C201 form a disulfide bridge. An ATP-binding site is contributed by G127. Residues K151–Q153 are interaction with tRNA. C201 acts as the Cysteine persulfide intermediate in catalysis.

This sequence belongs to the MnmA/TRMU family.

The protein resides in the cytoplasm. It carries out the reaction S-sulfanyl-L-cysteinyl-[protein] + uridine(34) in tRNA + AH2 + ATP = 2-thiouridine(34) in tRNA + L-cysteinyl-[protein] + A + AMP + diphosphate + H(+). In terms of biological role, catalyzes the 2-thiolation of uridine at the wobble position (U34) of tRNA, leading to the formation of s(2)U34. The chain is tRNA-specific 2-thiouridylase MnmA from Thermotoga maritima (strain ATCC 43589 / DSM 3109 / JCM 10099 / NBRC 100826 / MSB8).